Reading from the N-terminus, the 473-residue chain is 3-isopropylmalate dehydratase large subunit (473 aa).

[4Fe-4S] cluster is bound by residues cysteine 353, cysteine 414, and cysteine 417.

It belongs to the aconitase/IPM isomerase family. LeuC type 1 subfamily. Heterodimer of LeuC and LeuD. It depends on [4Fe-4S] cluster as a cofactor.

The catalysed reaction is (2R,3S)-3-isopropylmalate = (2S)-2-isopropylmalate. It participates in amino-acid biosynthesis; L-leucine biosynthesis; L-leucine from 3-methyl-2-oxobutanoate: step 2/4. Catalyzes the isomerization between 2-isopropylmalate and 3-isopropylmalate, via the formation of 2-isopropylmaleate. In Cellvibrio japonicus (strain Ueda107) (Pseudomonas fluorescens subsp. cellulosa), this protein is 3-isopropylmalate dehydratase large subunit.